The sequence spans 874 residues: Alanine--tRNA ligase (874 aa).

Zn(2+)-binding residues include His-564, His-568, Cys-665, and His-669.

This sequence belongs to the class-II aminoacyl-tRNA synthetase family. Requires Zn(2+) as cofactor.

The protein localises to the cytoplasm. It catalyses the reaction tRNA(Ala) + L-alanine + ATP = L-alanyl-tRNA(Ala) + AMP + diphosphate. Functionally, catalyzes the attachment of alanine to tRNA(Ala) in a two-step reaction: alanine is first activated by ATP to form Ala-AMP and then transferred to the acceptor end of tRNA(Ala). Also edits incorrectly charged Ser-tRNA(Ala) and Gly-tRNA(Ala) via its editing domain. This is Alanine--tRNA ligase from Burkholderia multivorans (strain ATCC 17616 / 249).